Here is a 163-residue protein sequence, read N- to C-terminus: ATP synthase subunit b 1 (163 aa).

The helical transmembrane segment at 5-25 (FDATFFAFVGLILFLALVVYL) threads the bilayer.

Belongs to the ATPase B chain family. In terms of assembly, F-type ATPases have 2 components, F(1) - the catalytic core - and F(0) - the membrane proton channel. F(1) has five subunits: alpha(3), beta(3), gamma(1), delta(1), epsilon(1). F(0) has three main subunits: a(1), b(2) and c(10-14). The alpha and beta chains form an alternating ring which encloses part of the gamma chain. F(1) is attached to F(0) by a central stalk formed by the gamma and epsilon chains, while a peripheral stalk is formed by the delta and b chains.

The protein localises to the cell inner membrane. Functionally, f(1)F(0) ATP synthase produces ATP from ADP in the presence of a proton or sodium gradient. F-type ATPases consist of two structural domains, F(1) containing the extramembraneous catalytic core and F(0) containing the membrane proton channel, linked together by a central stalk and a peripheral stalk. During catalysis, ATP synthesis in the catalytic domain of F(1) is coupled via a rotary mechanism of the central stalk subunits to proton translocation. Component of the F(0) channel, it forms part of the peripheral stalk, linking F(1) to F(0). The polypeptide is ATP synthase subunit b 1 (Rhizobium etli (strain ATCC 51251 / DSM 11541 / JCM 21823 / NBRC 15573 / CFN 42)).